The primary structure comprises 150 residues: Cytochrome c-type biogenesis protein CcmE (150 aa).

At 1–9 (MRNLKKTRR) the chain is on the cytoplasmic side. A helical; Signal-anchor for type II membrane protein membrane pass occupies residues 10–30 (IQILLVAGGALVLSTALIGYG). Over 31–150 (MRDGINFFRA…VYRDPAQPEG (120 aa)) the chain is Periplasmic. Heme contacts are provided by H123 and Y127.

It belongs to the CcmE/CycJ family.

It is found in the cell inner membrane. Heme chaperone required for the biogenesis of c-type cytochromes. Transiently binds heme delivered by CcmC and transfers the heme to apo-cytochromes in a process facilitated by CcmF and CcmH. The protein is Cytochrome c-type biogenesis protein CcmE of Rhodobacter capsulatus (strain ATCC BAA-309 / NBRC 16581 / SB1003).